The sequence spans 200 residues: Protein GrpE (200 aa).

A compositionally biased stretch (basic and acidic residues) spans 1 to 12; it reads MSNEEIKNKDEQ. A disordered region spans residues 1–30; sequence MSNEEIKNKDEQLQQDAVETEAEVVGTDAD.

The protein belongs to the GrpE family. In terms of assembly, homodimer.

Its subcellular location is the cytoplasm. Participates actively in the response to hyperosmotic and heat shock by preventing the aggregation of stress-denatured proteins, in association with DnaK and GrpE. It is the nucleotide exchange factor for DnaK and may function as a thermosensor. Unfolded proteins bind initially to DnaJ; upon interaction with the DnaJ-bound protein, DnaK hydrolyzes its bound ATP, resulting in the formation of a stable complex. GrpE releases ADP from DnaK; ATP binding to DnaK triggers the release of the substrate protein, thus completing the reaction cycle. Several rounds of ATP-dependent interactions between DnaJ, DnaK and GrpE are required for fully efficient folding. The polypeptide is Protein GrpE (Vibrio cholerae serotype O1 (strain ATCC 39315 / El Tor Inaba N16961)).